A 654-amino-acid polypeptide reads, in one-letter code: MICOS complex subunit MIC60-2 (654 aa).

The transit peptide at 1–12 (MRGSRNLLTQRL) directs the protein to the mitochondrion. Residues 13 to 20 (ASSRATGS) are Mitochondrial matrix-facing. Residues 21 to 43 (SGGLKFVGATVGAVTAGAAGVAG) traverse the membrane as a helical segment. The Mitochondrial intermembrane portion of the chain corresponds to 44–654 (YASYDNEFRK…AALTSIRSTY (611 aa)). A compositionally biased stretch (basic and acidic residues) spans 115–129 (LKETTEPKKIEKKPE). A disordered region spans residues 115–140 (LKETTEPKKIEKKPENPYIGAKTPLN).

The protein belongs to the MICOS complex subunit Mic60 family. Component of the mitochondrial contact site and cristae organizing system (MICOS) complex. In terms of tissue distribution, expressed in the gonads and muscle cells.

Its subcellular location is the mitochondrion inner membrane. The protein localises to the cytoplasm. In terms of biological role, sustains mitochondrial morphology probably through maintaining cristae morphology. May act as a component of the MICOS complex, a large protein complex of the mitochondria. The chain is MICOS complex subunit MIC60-2 from Caenorhabditis elegans.